The chain runs to 555 residues: MRLIGMPKEKYDPPDPRRIYTIMSAEEVANGKKSHWAELEISGRVRSLSTSLWSLTHLTALHLNDNNLARIPPDIAKLHNLVYLDLSSNKLRSLPAELGNMVSLRELLLNDNYLRVLPYELGRLFQLQTLGLTGNPLSQDIMSLYQDPDGTRKLLNFMLDNLAVHPEQLPPRPWITLKERDQILPSASFTVMCYNVLCDKYATRQLYGYCPSWALNWEYRKKGIMEEIVNWDADIISLQEVETEQYFTLFLPALKDRGYDGFFSPKSRAKIMSEQERKHVDGCAIFFKTEKFTLVQKHTVEFNQVAMANSDGSEAMLNRVMTKDNIGVAVVLEVHKELFGTGMKPIHAADKQLLIVANAHMHWDPEYSDVKLIQTMMFVSEVKNILEKASSRPGSPTADPNSIPLVLCADLNSLPDSGVVEYLSNGGVADNHKDFKELRYNECLMNFSCSGKNGSSEGRITHGFQLKSAYENNLMPYTNYTFDFKGVIDYIFYSKTHMNVLGVLGPLDPQWLVENNITGCPHPHIPSDHFSLLTQLELHPPLLPLVNGVHLPNRR.

Residues 1 to 152 (MRLIGMPKEK…SLYQDPDGTR (152 aa)) are required for interaction with CNOT1, CNOT3 and CNOT7. 4 LRR repeats span residues 57–78 (HLTALHLNDNNLARIPPDIAKL), 80–101 (NLVYLDLSSNKLRSLPAELGNM), 103–125 (SLRELLLNDNYLRVLPYELGRLF), and 126–148 (QLQTLGLTGNPLSQDIMSLYQDP). A nuclease domain region spans residues 158-555 (MLDNLAVHPE…VNGVHLPNRR (398 aa)). Glu-240 is a binding site for Mg(2+). Residues Glu-240, Glu-276, His-360, and Pro-365 each contribute to the substrate site. Asp-410 is a Mg(2+) binding site. Asp-410 (proton donor/acceptor) is an active-site residue. Residues Asn-412, Asn-479, and Phe-484 each coordinate substrate.

The protein belongs to the CCR4/nocturin family. In terms of assembly, component of the CCR4-NOT complex; distinct complexes seem to exist that differ in the participation of probably mutually exclusive catalytic subunits; the complex contains two deadenylase subunits, CNOT6 or CNOT6L, and CNOT7 or CNOT8. Interacts with CNOT1, CNOT3, CNOT7, CNOT8 and CNOT9. Interacts with TOB1. Interacts with NANOS2. Interacts with ZFP36. Interacts with ZFP36L2. Interacts with RBM46. It depends on Mg(2+) as a cofactor.

The protein resides in the cytoplasm. The protein localises to the nucleus. It catalyses the reaction Exonucleolytic cleavage of poly(A) to 5'-AMP.. In terms of biological role, poly(A) nuclease with 3'-5' RNase activity. Catalytic component of the CCR4-NOT complex which is one of the major cellular mRNA deadenylases and is linked to various cellular processes including bulk mRNA degradation, miRNA-mediated repression, translational repression during translational initiation and general transcription regulation. Additional complex functions may be a consequence of its influence on mRNA expression. Involved in mRNA decay mediated by the major-protein-coding determinant of instability (mCRD) of the FOS gene in the cytoplasm. Involved in deadenylation-dependent degradation of CDKN1B mRNA. Its mRNA deadenylase activity can be inhibited by TOB1. Mediates cell proliferation and cell survival and prevents cellular senescence. This is CCR4-NOT transcription complex subunit 6-like (Cnot6l) from Mus musculus (Mouse).